The primary structure comprises 361 residues: Hsc70-interacting protein (361 aa).

A disordered region spans residues 39–98; the sequence is GGTIPPAPASTSTDETSKGKAEEQPEEPVKSPEPESEESDLEIDNEGVIEPDNDDPQEMG. The span at 53–71 shows a compositional bias: basic and acidic residues; the sequence is ETSKGKAEEQPEEPVKSPE. Acidic residues predominate over residues 72–98; it reads PESEESDLEIDNEGVIEPDNDDPQEMG. TPR repeat units lie at residues 112–145, 147–179, and 181–213; these read ANEKKMEAINALSEGDLQKAVNLFTDAIKLNPCL, ILYAKRASVFVKLQKPNAAIRDCDRAIKINPDS, and QTYKWRGKAHRLLGHWEEAAHDLALACKLDYDE. A compositionally biased stretch (basic and acidic residues) spans 254–270; the sequence is KAREEHERAQREEEARR. The disordered stretch occupies residues 254–292; the sequence is KAREEHERAQREEEARRQAGGAQFGGFPGGFPGGFPGAM. The span at 275–292 shows a compositional bias: gly residues; that stretch reads AQFGGFPGGFPGGFPGAM. Residues 311–350 form the STI1 domain; that stretch reads DPEVLAAMQDPEVMAAFQDVAQNPANMSKYQNNPKVMSLI.

The protein belongs to the FAM10 family. In terms of assembly, homotetramer. Interacts with HSC70 as well as DNAJ homologs and HSP90.

It localises to the cytoplasm. One HIP oligomer binds the ATPase domains of at least two HSC70 molecules dependent on activation of the HSC70 ATPase by HSP40. Stabilizes the ADP state of HSC70 that has a high affinity for substrate protein. Through its own chaperone activity, it may contribute to the interaction of HSC70 with various target proteins. In Gallus gallus (Chicken), this protein is Hsc70-interacting protein (ST13).